Here is a 386-residue protein sequence, read N- to C-terminus: Succinate--CoA ligase [ADP-forming] subunit beta (386 aa).

An ATP-grasp domain is found at Lys9 to Glu244. ATP contacts are provided by residues Lys46, Gly53–Gly55, Glu99, Cys102, and Glu107. Mg(2+)-binding residues include Asn199 and Asp213. Substrate-binding positions include Asn264 and Gly321–Met323.

Belongs to the succinate/malate CoA ligase beta subunit family. In terms of assembly, heterotetramer of two alpha and two beta subunits. Mg(2+) is required as a cofactor.

It carries out the reaction succinate + ATP + CoA = succinyl-CoA + ADP + phosphate. The catalysed reaction is GTP + succinate + CoA = succinyl-CoA + GDP + phosphate. It participates in carbohydrate metabolism; tricarboxylic acid cycle; succinate from succinyl-CoA (ligase route): step 1/1. Its function is as follows. Succinyl-CoA synthetase functions in the citric acid cycle (TCA), coupling the hydrolysis of succinyl-CoA to the synthesis of either ATP or GTP and thus represents the only step of substrate-level phosphorylation in the TCA. The beta subunit provides nucleotide specificity of the enzyme and binds the substrate succinate, while the binding sites for coenzyme A and phosphate are found in the alpha subunit. The polypeptide is Succinate--CoA ligase [ADP-forming] subunit beta (Bacillus licheniformis (strain ATCC 14580 / DSM 13 / JCM 2505 / CCUG 7422 / NBRC 12200 / NCIMB 9375 / NCTC 10341 / NRRL NRS-1264 / Gibson 46)).